Reading from the N-terminus, the 660-residue chain is UvrABC system protein B (660 aa).

A Helicase ATP-binding domain is found at 26–196 (DGIDEKKEHQ…ELNKGQFDVK (171 aa)). 39-46 (GVTGSGKT) serves as a coordination point for ATP. The Beta-hairpin signature appears at 92 to 115 (YFDFYKPEAYIPKSDLYIEKTSKN). The Helicase C-terminal domain maps to 431 to 593 (QIEDIYDHLK…IIPKTIVKPI (163 aa)). The UVR domain maps to 622-657 (KKFIDQMVRKMTQLAKANKFEEAIEIRDYLIEIGIE).

This sequence belongs to the UvrB family. In terms of assembly, forms a heterotetramer with UvrA during the search for lesions. Interacts with UvrC in an incision complex.

Its subcellular location is the cytoplasm. Its function is as follows. The UvrABC repair system catalyzes the recognition and processing of DNA lesions. A damage recognition complex composed of 2 UvrA and 2 UvrB subunits scans DNA for abnormalities. Upon binding of the UvrA(2)B(2) complex to a putative damaged site, the DNA wraps around one UvrB monomer. DNA wrap is dependent on ATP binding by UvrB and probably causes local melting of the DNA helix, facilitating insertion of UvrB beta-hairpin between the DNA strands. Then UvrB probes one DNA strand for the presence of a lesion. If a lesion is found the UvrA subunits dissociate and the UvrB-DNA preincision complex is formed. This complex is subsequently bound by UvrC and the second UvrB is released. If no lesion is found, the DNA wraps around the other UvrB subunit that will check the other stand for damage. In Metamycoplasma arthritidis (strain 158L3-1) (Mycoplasma arthritidis), this protein is UvrABC system protein B.